We begin with the raw amino-acid sequence, 1654 residues long: Mediator of RNA polymerase II transcription subunit 12 (1654 aa).

2 disordered regions span residues 52–72 and 1481–1530; these read DLNG…LSGN and SKQT…SFQT. Positions 1515–1530 are enriched in polar residues; the sequence is PLSSARPSSEAASFQT.

It belongs to the Mediator complex subunit 12 family. As to quaternary structure, component of the SRB8-11 complex, which itself associates with the Mediator complex.

Its subcellular location is the nucleus. Its function is as follows. Component of the SRB8-11 complex. The SRB8-11 complex is a regulatory module of the Mediator complex which is itself involved in regulation of basal and activated RNA polymerase II-dependent transcription. The SRB8-11 complex may be involved in the transcriptional repression of a subset of genes regulated by Mediator. It may inhibit the association of the Mediator complex with RNA polymerase II to form the holoenzyme complex. This chain is Mediator of RNA polymerase II transcription subunit 12 (SRB8), found in Scheffersomyces stipitis (strain ATCC 58785 / CBS 6054 / NBRC 10063 / NRRL Y-11545) (Yeast).